Here is a 371-residue protein sequence, read N- to C-terminus: Cyanide hydratase (371 aa).

The region spanning 8–286 is the CN hydrolase domain; the sequence is YKAAAVQAEP…EGLMFVEIDL (279 aa). Glu-48 functions as the Proton acceptor in the catalytic mechanism. Lys-130 is an active-site residue. Cys-165 (nucleophile) is an active-site residue. The interval 326-356 is disordered; it reads DGGIGTYNTQDRVGLNRPLDAPKVDGPSGVS.

The protein belongs to the carbon-nitrogen hydrolase superfamily. Nitrilase family. In terms of assembly, oligomer of dimers, forming left-handed helical fibers.

The enzyme catalyses formamide = hydrogen cyanide + H2O. In terms of biological role, catalyzes the hydration of cyanide to formamide. Degradation of cyanide may be important for plant pathogenic fungi in infection of cyanogenic plants. Can also transform some nitriles like 2-cyanopyridine and fumaronitrile and has a minor activity with 4-cyanophenyl acetonitrile (4-CPA). The polypeptide is Cyanide hydratase (Botryotinia fuckeliana (strain T4) (Noble rot fungus)).